The following is a 276-amino-acid chain: MIAAGAKSLLGLSMASPKGIFDSNSMSNSRSVVVVRACVSMDGSQTLSHNKNGSIPEVKSINGHTGQKQGPLSTVGNSTNIKWHECSVEKVDRQRLLDQKGCVIWVTGLSGSGKSTLACALNQMLYQKGKLCYILDGDNVRHGLNRDLSFKAEDRAENIRRVGEVAKLFADAGIICIASLISPYRTDRDACRSLLPEGDFVEVFMDVPLSVCEARDPKGLYKLARAGKIKGFTGIDDPYEPPLNCEISLGREGGTSPIEMAEKVVGYLDNKGYLQA.

The transit peptide at 1–38 (MIAAGAKSLLGLSMASPKGIFDSNSMSNSRSVVVVRAC) directs the protein to the chloroplast. Residues 46–74 (TLSHNKNGSIPEVKSINGHTGQKQGPLST) are disordered. Positions 62–74 (NGHTGQKQGPLST) are enriched in polar residues. An ATP-binding site is contributed by 108-116 (GLSGSGKST). Residues aspartate 138, arginine 141, arginine 155, asparagine 158, 181-182 (IS), and glycine 231 contribute to the substrate site. The active-site Phosphoserine intermediate is serine 182.

Belongs to the APS kinase family. As to quaternary structure, homodimer; disulfide-linked. Interacts with APK2. As to expression, expressed in root vasculature, root tips, leaf epidermal and guard cells, pollen grains and funiculus of developing seeds.

The protein localises to the plastid. It is found in the chloroplast. It carries out the reaction adenosine 5'-phosphosulfate + ATP = 3'-phosphoadenylyl sulfate + ADP + H(+). It functions in the pathway sulfur metabolism; hydrogen sulfide biosynthesis; sulfite from sulfate: step 2/3. In terms of biological role, catalyzes the synthesis of activated sulfate. Essential for plant reproduction and viability. Required for the production of glucosinolates. The chain is Adenylyl-sulfate kinase 1, chloroplastic (APK1) from Arabidopsis thaliana (Mouse-ear cress).